We begin with the raw amino-acid sequence, 121 residues long: Small ribosomal subunit protein uS13 (121 aa).

The disordered stretch occupies residues 97-121 (VRGQRTRTNARTRRGARKTVAGRKK). A compositionally biased stretch (basic residues) spans 100–121 (QRTRTNARTRRGARKTVAGRKK).

Belongs to the universal ribosomal protein uS13 family. As to quaternary structure, part of the 30S ribosomal subunit. Forms a loose heterodimer with protein S19. Forms two bridges to the 50S subunit in the 70S ribosome.

Its function is as follows. Located at the top of the head of the 30S subunit, it contacts several helices of the 16S rRNA. In the 70S ribosome it contacts the 23S rRNA (bridge B1a) and protein L5 of the 50S subunit (bridge B1b), connecting the 2 subunits; these bridges are implicated in subunit movement. Contacts the tRNAs in the A and P-sites. The chain is Small ribosomal subunit protein uS13 from Prochlorococcus marinus (strain NATL1A).